The sequence spans 191 residues: Calcium-activated potassium channel subunit beta-1 (191 aa).

Residues 1-18 lie on the Cytoplasmic side of the membrane; that stretch reads MGKKLVMAQKRGETRALC. Residues 19–39 traverse the membrane as a helical segment; the sequence is LGVAMVVCAAITYYILGTTVL. Residues 40 to 155 lie on the Extracellular side of the membrane; it reads PLYQKSVWTQ…VVYQRLYGPQ (116 aa). N-linked (GlcNAc...) asparagine glycans are attached at residues Asn80 and Asn142. The chain crosses the membrane as a helical span at residues 156–176; that stretch reads ILLFSFFWPTFLLTGGLLIIA. At 177–191 the chain is on the cytoplasmic side; it reads MVKLNRSLSVLAAQK.

This sequence belongs to the KCNMB (TC 8.A.14.1) family. KCNMB1 subfamily. Interacts with KCNMA1 tetramer. There are probably 4 molecules of KCMNB1 per KCNMA1 tetramer. Post-translationally, N-glycosylated. Weakly expressed. In brain, it is expressed in a few discrete populations of neurons that also express KCNMA1.

It is found in the membrane. Regulatory subunit of the calcium activated potassium KCNMA1 (maxiK) channel. Modulates the calcium sensitivity and gating kinetics of KCNMA1, thereby contributing to KCNMA1 channel diversity. Increases the apparent Ca(2+)/voltage sensitivity of the KCNMA1 channel. It also modifies KCNMA1 channel kinetics and alters its pharmacological properties. It slows down the activation and the deactivation kinetics of the channel. Acts as a negative regulator of smooth muscle contraction by enhancing the calcium sensitivity to KCNMA1. Its presence is also a requirement for internal binding of the KCNMA1 channel opener dehydrosoyasaponin I (DHS-1) triterpene glycoside and for external binding of the agonist hormone 17-beta-estradiol (E2). Increases the binding activity of charybdotoxin (CTX) toxin to KCNMA1 peptide blocker by increasing the CTX association rate and decreasing the dissociation rate. The protein is Calcium-activated potassium channel subunit beta-1 (Kcnmb1) of Rattus norvegicus (Rat).